We begin with the raw amino-acid sequence, 56 residues long: Large ribosomal subunit protein bL33 (56 aa).

It belongs to the bacterial ribosomal protein bL33 family.

This Beutenbergia cavernae (strain ATCC BAA-8 / DSM 12333 / CCUG 43141 / JCM 11478 / NBRC 16432 / NCIMB 13614 / HKI 0122) protein is Large ribosomal subunit protein bL33.